Here is a 576-residue protein sequence, read N- to C-terminus: MELNAGGVIAYISSSSSASSPASCHSEGSENSFQSSSSSVPSSPNSSNCDANGNPKNADISSIDGVLKSDRTDCPVKTGKTSAPGMTKSHSGMTKFSGMVLLCKVCGDVASGFHYGVHACEGCKGFFRRSIQQNIQYKKCLKNENCSIMRMNRNRCQQCRFKKCLSVGMSRDAVRFGRIPKREKQRMLIEMQSAMKTMMNTQFSGHLQNDTLAEQHDQSALPAQEQLRPKSQLEQENIKNTPSDFAKEEVIGMVTRAHKDTFLYNQEHRENSSESMPPQRGERIPRNMEQYNLNQDHRGSGIHNHFPCSERQQHLSGQYKGRNIMHYPNGHAVCIANGHCMNFSSAYTQRVCDRIPVGGCSQTENRNSYLCNTGGRMHLVCPMSKSPYVDPQKSGHEIWEEFSMSFTPAVKEVVEFAKRIPGFRDLSQHDQVNLLKAGTFEVLMVRFASLFDAKERTVTFLSGKKYSVDDLHSMGAGDLLSSMFEFSEKLNALQLSDEEMSLFTAVVLVSADRSGIENVNSVEALQETLIRALRTLIMKNHPNEASIFTKLLLKLPDLRSLNNMHSEELLAFKVHP.

The segment at M1–I60 is required for phosphorylation by CSNK1E and cytoplasmic localization. A modulating region spans residues M1 to M99. The segment covering S13 to S47 has biased composition (low complexity). The segment at S13–H90 is disordered. At S46 the chain carries Phosphoserine; by GSK3-beta. Positions V100–F176 form a DNA-binding region, nuclear receptor. NR C4-type zinc fingers lie at residues C103–C123 and C140–C164. Residues K162 and K163 each carry the N6-acetyllysine; by KAT5 modification. Disordered stretches follow at residues Q215–A246 and L263–E282. 2 stretches are compositionally biased toward basic and acidic residues: residues L227 to N237 and L263 to S272. 2 cysteine pairs are disulfide-bonded: C334–C340 and C371–C381. Residues R366 to P576 enclose the NR LBD domain. C381 and H565 together coordinate heme. Residues S394–P576 are interaction with ZNHIT1.

The protein belongs to the nuclear hormone receptor family. NR1 subfamily. Binds DNA as a monomer or a homodimer. Interacts with NCOA5 coactivator, leading to a strong increase of transcription of target genes. Interacts (via N-terminus) with KAT5. Interacts (via C-terminus) with HDAC1. Interacts with ZNHIT1. Interacts with SIAH2. In terms of processing, deacetylated by HDAC1. Acetylation and deacetylation regulate its transcriptional regulatory activity. Under more reducing intracellular redox conditions, Cys-381 is in its heme-bound state, which is optimal for recruitment of the NCOR1/HDAC3 corepressor complex and repression of target genes. When subjected to oxidative stress conditions, Cys-381 undergoes oxidation to form a disulfide bridge with Cys-371, also triggering a ligand switch that results in release of bound heme and derepression of target genes. Post-translationally, ubiquitinated by SIAH2; leading to its proteasomal degradation. In terms of processing, phosphorylated by CSNK1E; phosphorylation enhances its cytoplasmic localization. Ubiquitous. Expressed abundantly in skeletal muscle and brown adipose tissue. Expressed during skeletal muscle myogenesis.

It is found in the nucleus. The protein resides in the cytoplasm. With respect to regulation, the heme-bound form can bind gaseous signaling molecules such as CO and nitric oxide (NO) and NO can reverse its transcriptional repressor activity. Functionally, transcriptional repressor which coordinates circadian rhythm and metabolic pathways in a heme-dependent manner. Integral component of the complex transcription machinery that governs circadian rhythmicity and forms a critical negative limb of the circadian clock by directly repressing the expression of core clock components BMAL1 and CLOCK. Also regulates genes involved in metabolic functions, including lipid metabolism and the inflammatory response. Acts as a receptor for heme which stimulates its interaction with the NCOR1/HDAC3 corepressor complex, enhancing transcriptional repression. Recognizes two classes of DNA response elements within the promoter of its target genes and can bind to DNA as either monomers or homodimers, depending on the nature of the response element. Binds as a monomer to a response element composed of the consensus half-site motif 5'-[A/G]GGTCA-3' preceded by an A/T-rich 5' sequence (RevRE), or as a homodimer to a direct repeat of the core motif spaced by two nuclegotides (RevDR-2). Acts as a potent competitive repressor of ROR alpha (RORA) function and also negatively regulates the expression of NR1D1. Regulates lipid and energy homeostasis in the skeletal muscle via repression of genes involved in lipid metabolism and myogenesis including: CD36, FABP3, FABP4, UCP3, SCD1 and MSTN. Regulates hepatic lipid metabolism via the repression of APOC3. Represses gene expression at a distance in macrophages by inhibiting the transcription of enhancer-derived RNAs (eRNAs). In addition to its activity as a repressor, can also act as a transcriptional activator. Acts as a transcriptional activator of the sterol regulatory element-binding protein 1 (SREBF1) and the inflammatory mediator interleukin-6 (IL6) in the skeletal muscle. Plays a role in the regulation of circadian sleep/wake cycle; essential for maintaining wakefulness during the dark phase or active period. Key regulator of skeletal muscle mitochondrial function; negatively regulates the skeletal muscle expression of core clock genes and genes involved in mitochondrial biogenesis, fatty acid beta-oxidation and lipid metabolism. May play a role in the circadian control of neutrophilic inflammation in the lung. The sequence is that of Nuclear receptor subfamily 1 group D member 2 from Mus musculus (Mouse).